A 142-amino-acid polypeptide reads, in one-letter code: Large ribosomal subunit protein uL11 (142 aa).

Residue A2 is modified to N,N,N-trimethylalanine. K4 and K40 each carry N6,N6,N6-trimethyllysine.

This sequence belongs to the universal ribosomal protein uL11 family. In terms of assembly, part of the ribosomal stalk of the 50S ribosomal subunit. Interacts with L10 and the large rRNA to form the base of the stalk. L10 forms an elongated spine to which L12 dimers bind in a sequential fashion forming a multimeric L10(L12)X complex. One or more lysine residues are methylated.

Functionally, forms part of the ribosomal stalk which helps the ribosome interact with GTP-bound translation factors. This Shigella flexneri protein is Large ribosomal subunit protein uL11.